The following is a 512-amino-acid chain: 2,3-bisphosphoglycerate-independent phosphoglycerate mutase (512 aa).

Mn(2+) contacts are provided by Asp11 and Ser61. The active-site Phosphoserine intermediate is the Ser61. Substrate contacts are provided by residues His122, Arg152–Asp153, Arg184, Arg190, Arg259–Arg262, and Lys332. Asp399, His403, Asp440, His441, and His459 together coordinate Mn(2+).

It belongs to the BPG-independent phosphoglycerate mutase family. In terms of assembly, monomer. The cofactor is Mn(2+).

It catalyses the reaction (2R)-2-phosphoglycerate = (2R)-3-phosphoglycerate. It functions in the pathway carbohydrate degradation; glycolysis; pyruvate from D-glyceraldehyde 3-phosphate: step 3/5. Functionally, catalyzes the interconversion of 2-phosphoglycerate and 3-phosphoglycerate. This is 2,3-bisphosphoglycerate-independent phosphoglycerate mutase from Francisella tularensis subsp. tularensis (strain WY96-3418).